Consider the following 469-residue polypeptide: Probable ribonuclease FAU-1 (469 aa).

Belongs to the FAU-1 family.

Probable RNase involved in rRNA stability through maturation and/or degradation of precursor rRNAs. Binds to RNA in loop regions with AU-rich sequences. This chain is Probable ribonuclease FAU-1, found in Pyrococcus horikoshii (strain ATCC 700860 / DSM 12428 / JCM 9974 / NBRC 100139 / OT-3).